A 391-amino-acid chain; its full sequence is Paired box protein Pax-5 (391 aa).

A DNA-binding region (paired) is located at residues 16-142 (GHGGVNQLGG…SSINRIIRTK (127 aa)). The segment at 19–75 (GVNQLGGVFVNGRPLPDVVRQRIVELAHQGVRPCDISRQLRVSHGCVSKILGRYYET) is PAI subdomain. The interval 94 to 142 (KVVEKIAEYKRQNPTMFAWEIRDRLLAERVCDNDTVPSVSSINRIIRTK) is RED subdomain. Positions 182 to 218 (SGILGITSPSADTNKRKRDEGIQESPVPNGHSLPGRD) are disordered.

Interacts with ETS1; this interaction alters PAX5 DNA-binding properties. Binds DNA as a monomer. Interacts with TBP; this interaction allows PAX5 to interact with the basal transcription machinery. Interacts with RB1. Interacts with TLE4. Interacts with DAXX. O-glycosylated. Post-translationally, phosphorylated by SYK. This phosphorylation plays an important role in the abolition of BLIMP1 repression by PAX5 in order to trigger plasma cell differentiation. In terms of tissue distribution, expressed in all B-lymphoid organs, in the embryonic midbrain and in adult testis.

It localises to the nucleus. Functionally, transcription factor that plays an essential role in commitment of lymphoid progenitors to the B-lymphocyte lineage. Fulfills a dual role by repressing B-lineage inappropriate genes and simultaneously activating B-lineage-specific genes. In turn, regulates cell adhesion and migration, induces V(H)-to-D(H)J(H) recombination, facilitates pre-B-cell receptor signaling and promotes development to the mature B-cell stage. Repression of the cohesin-release factor WAPL causes global changes of the chromosomal architecture in pro-B cells to facilitate the generation of a diverse antibody repertoire. This chain is Paired box protein Pax-5 (Pax5), found in Mus musculus (Mouse).